Here is a 357-residue protein sequence, read N- to C-terminus: 3-isopropylmalate dehydrogenase (357 aa).

Residue 76–89 (GPQWDTIDPSLRPE) coordinates NAD(+). Substrate contacts are provided by R96, R106, R134, and D224. Mg(2+)-binding residues include D224, D248, and D252. NAD(+) is bound at residue 282-294 (GSAPDIAGKGIAN).

The protein belongs to the isocitrate and isopropylmalate dehydrogenases family. LeuB type 1 subfamily. In terms of assembly, homodimer. The cofactor is Mg(2+). Requires Mn(2+) as cofactor.

Its subcellular location is the cytoplasm. It carries out the reaction (2R,3S)-3-isopropylmalate + NAD(+) = 4-methyl-2-oxopentanoate + CO2 + NADH. It functions in the pathway amino-acid biosynthesis; L-leucine biosynthesis; L-leucine from 3-methyl-2-oxobutanoate: step 3/4. Functionally, catalyzes the oxidation of 3-carboxy-2-hydroxy-4-methylpentanoate (3-isopropylmalate) to 3-carboxy-4-methyl-2-oxopentanoate. The product decarboxylates to 4-methyl-2 oxopentanoate. This chain is 3-isopropylmalate dehydrogenase, found in Xanthomonas euvesicatoria pv. vesicatoria (strain 85-10) (Xanthomonas campestris pv. vesicatoria).